We begin with the raw amino-acid sequence, 444 residues long: Putative zinc metalloprotease PD_0327 (444 aa).

H22 contributes to the Zn(2+) binding site. E23 is a catalytic residue. H26 serves as a coordination point for Zn(2+). The chain crosses the membrane as a helical span at residues 98–120 (IAIVAAGPLANLLLCMLLLWVLF). A PDZ domain is found at 192–278 (TLELSKLKQP…HPGMIEIRRG (87 aa)). The next 2 helical transmembrane spans lie at 371 to 393 (VGWF…LFPI) and 418 to 440 (AMAA…AFYN).

This sequence belongs to the peptidase M50B family. It depends on Zn(2+) as a cofactor.

It localises to the cell inner membrane. The sequence is that of Putative zinc metalloprotease PD_0327 from Xylella fastidiosa (strain Temecula1 / ATCC 700964).